A 533-amino-acid polypeptide reads, in one-letter code: DNA primase large subunit (533 aa).

Positions 298, 377, 393, and 433 each coordinate [4Fe-4S] cluster. Positions 466-492 are disordered; sequence RQKRANGSAPPKARIRPDIKGHGDRSM. Basic and acidic residues predominate over residues 480-490; it reads IRPDIKGHGDR.

The protein belongs to the eukaryotic-type primase large subunit family. Heterodimer of a catalytic subunit Prim1 and a regulatory subunit Prim2, also known as the DNA primase complex. Component of the alpha DNA polymerase complex (also known as the alpha DNA polymerase-primase complex) consisting of four subunits: the catalytic subunit PolA1, the regulatory subunit PolA2, and the primase complex subunits Prim1 and Prim2 respectively. PolA1 associates with the DNA primase complex before association with PolA2. It depends on [4Fe-4S] cluster as a cofactor. In terms of tissue distribution, expressed in embryos (at protein level).

Regulatory subunit of the DNA primase complex and component of the DNA polymerase alpha complex (also known as the alpha DNA polymerase-primase complex) which play an essential role in the initiation of DNA synthesis. During the S phase of the cell cycle, the DNA polymerase alpha complex (composed of a catalytic subunit PolA1, an accessory subunit PolA2 and two primase subunits, the catalytic subunit Prim1 and the regulatory subunit Prim2) is recruited to DNA at the replicative forks. The primase subunit of the polymerase alpha complex initiates DNA synthesis by oligomerising short RNA primers on both leading and lagging strands. These primers are initially extended by the polymerase alpha catalytic subunit and subsequently transferred to polymerase delta and polymerase epsilon for processive synthesis on the lagging and leading strand, respectively. In the primase complex, both subunits are necessary for the initial di-nucleotide formation, but the extension of the primer depends only on the catalytic subunit. Stabilizes and modulates the activity of the catalytic subunit. This Drosophila melanogaster (Fruit fly) protein is DNA primase large subunit.